The sequence spans 301 residues: Phosphate butyryltransferase (301 aa).

This sequence belongs to the phosphate acetyltransferase and butyryltransferase family.

The enzyme catalyses butanoyl-CoA + phosphate = butanoyl phosphate + CoA. It functions in the pathway lipid metabolism; butanoate metabolism. In terms of biological role, catalyzes the conversion of butyryl-CoA through butyryl phosphate to butyrate. The sequence is that of Phosphate butyryltransferase (ptb) from Clostridium acetobutylicum (strain ATCC 824 / DSM 792 / JCM 1419 / IAM 19013 / LMG 5710 / NBRC 13948 / NRRL B-527 / VKM B-1787 / 2291 / W).